Here is a 590-residue protein sequence, read N- to C-terminus: MNKQLKEKLALLPDQPGCYLMKDRQQTVIYVGKAKVLKNRVRSYFTGSHDAKTQRLVTEIEDFEYIVTSSNLEALILEMNLIKKHDPKYNVMLKDDKTYPFIKLTHERHPRLIVTRNVKKDKGRYFGPYPNVQAARETKKLLDRLYPLRKCSKLPDRVCLYYHLGQCLAPCVKDISEETNRELVESITRFLRGGYNEVKKELEEKMHEAAENLEFERAKELRDQIAHIESTMEKQKMTMNDLVDRDVFAYAYDKGWMCVQVFFIRQGKLIERDVSMFPLYQEADEEFLTFIGQFYSKNNHFLPKEILVPDSIDQSMIEQLLETNVHQPKKGPKKELLMLAHKNAKIALKEKFSLIERDEERSIGAVQKLGEALNIYTPHRIEAFDNSNIQGTNPVSAMIVFIDGKPYKKEYRKYKIKTVTGPDDYGSMREVVRRRYTRVLRENLPLPDLIIIDGGKGQINAARDVIENELGLDIPIAGLAKDEKHRTSNLLIGDPLEVAYLERNSQEFYLLQRIQDEVHRFAISFHRQIRGKSAFQSVLDDIPGIGEKRKKMLLKHFGSVKKMKEASLEDIKKAGVPAAAAQLLYDKLQK.

In terms of domain architecture, GIY-YIG spans 14 to 91 (DQPGCYLMKD…IKKHDPKYNV (78 aa)). The UVR domain occupies 196–231 (NEVKKELEEKMHEAAENLEFERAKELRDQIAHIEST).

It belongs to the UvrC family. As to quaternary structure, interacts with UvrB in an incision complex.

Its subcellular location is the cytoplasm. Its function is as follows. The UvrABC repair system catalyzes the recognition and processing of DNA lesions. UvrC both incises the 5' and 3' sides of the lesion. The N-terminal half is responsible for the 3' incision and the C-terminal half is responsible for the 5' incision. The protein is UvrABC system protein C of Bacillus subtilis (strain 168).